We begin with the raw amino-acid sequence, 88 residues long: Large ribosomal subunit protein bL27 (88 aa).

The interval 1-21 is disordered; the sequence is MAHKKGTGSTRNGRDSRAQRL.

Belongs to the bacterial ribosomal protein bL27 family.

The protein is Large ribosomal subunit protein bL27 of Picosynechococcus sp. (strain ATCC 27264 / PCC 7002 / PR-6) (Agmenellum quadruplicatum).